Here is a 431-residue protein sequence, read N- to C-terminus: tRNA-specific 2-thiouridylase MnmA (431 aa).

Residues 35-42 (AMSGGVDS) and L61 contribute to the ATP site. C129 functions as the Nucleophile in the catalytic mechanism. C129 and C226 form a disulfide bridge. ATP is bound at residue G153. Residues 176–178 (RDQ) are interaction with tRNA. C226 acts as the Cysteine persulfide intermediate in catalysis. Positions 407-431 (PKPPNEDLLDTNESSDLVSPKRSAC) are disordered.

This sequence belongs to the MnmA/TRMU family.

It localises to the cytoplasm. The catalysed reaction is S-sulfanyl-L-cysteinyl-[protein] + uridine(34) in tRNA + AH2 + ATP = 2-thiouridine(34) in tRNA + L-cysteinyl-[protein] + A + AMP + diphosphate + H(+). Catalyzes the 2-thiolation of uridine at the wobble position (U34) of tRNA, leading to the formation of s(2)U34. This is tRNA-specific 2-thiouridylase MnmA from Beijerinckia indica subsp. indica (strain ATCC 9039 / DSM 1715 / NCIMB 8712).